The following is a 249-amino-acid chain: NAD kinase (249 aa).

The Proton acceptor role is filled by D49. Residues 49–50 (DG), R54, 115–116 (NE), K126, R143, D145, I153, 156–161 (TGYAFS), A180, and Q211 each bind NAD(+).

The protein belongs to the NAD kinase family. As to quaternary structure, homotetramer. A divalent metal cation is required as a cofactor.

It is found in the cytoplasm. It carries out the reaction NAD(+) + ATP = ADP + NADP(+) + H(+). Involved in the regulation of the intracellular balance between NAD(H) and NADP(H), and is a key enzyme in the biosynthesis of NADP. Catalyzes specifically the phosphorylation on 2'-hydroxyl of the adenosine moiety of NAD to yield NADP. The protein is NAD kinase of Archaeoglobus fulgidus (strain ATCC 49558 / DSM 4304 / JCM 9628 / NBRC 100126 / VC-16).